A 305-amino-acid polypeptide reads, in one-letter code: tRNA dimethylallyltransferase (305 aa).

Glycine 8–threonine 15 is an ATP binding site. Position 10–15 (threonine 10–threonine 15) interacts with substrate. Residues aspartate 33–glutamine 36 form an interaction with substrate tRNA region.

Belongs to the IPP transferase family. Monomer. Requires Mg(2+) as cofactor.

It catalyses the reaction adenosine(37) in tRNA + dimethylallyl diphosphate = N(6)-dimethylallyladenosine(37) in tRNA + diphosphate. Its function is as follows. Catalyzes the transfer of a dimethylallyl group onto the adenine at position 37 in tRNAs that read codons beginning with uridine, leading to the formation of N6-(dimethylallyl)adenosine (i(6)A). The chain is tRNA dimethylallyltransferase from Thermotoga petrophila (strain ATCC BAA-488 / DSM 13995 / JCM 10881 / RKU-1).